A 206-amino-acid chain; its full sequence is Urease accessory protein UreE (206 aa).

The disordered stretch occupies residues 136–206; sequence PEGGAYAEPS…HGHAHAHDRK (71 aa). 2 stretches are compositionally biased toward basic and acidic residues: residues 148-169 and 177-191; these read QGHD…GGHE and HGHA…EHCG. Residues 192–206 are compositionally biased toward basic residues; the sequence is HGHHHHGHAHAHDRK.

Belongs to the UreE family.

The protein localises to the cytoplasm. Functionally, involved in urease metallocenter assembly. Binds nickel. Probably functions as a nickel donor during metallocenter assembly. This chain is Urease accessory protein UreE, found in Bradyrhizobium sp. (strain BTAi1 / ATCC BAA-1182).